A 179-amino-acid polypeptide reads, in one-letter code: Ferric nitrobindin-like protein (179 aa).

Positions 17-23 match the GXWXGXG motif; that stretch reads GRWEGLG.

It belongs to the nitrobindin family.

The chain is Ferric nitrobindin-like protein from Thermobifida fusca (strain YX).